We begin with the raw amino-acid sequence, 470 residues long: E3 SUMO-protein ligase EGR2 (470 aa).

Low complexity predominate over residues Pro126–Pro141. Disordered regions lie at residues Pro126–Thr153, Pro159–Thr178, and Asp184–Pro211. The residue at position 247 (Lys247) is an N6-acetyllysine; by EP300. Residues Gly275 to Cys344 form a disordered region. The segment covering Thr281–Gly291 has biased composition (gly residues). 3 C2H2-type zinc fingers span residues Tyr337–His361, Phe367–His389, and Phe395–His417. The disordered stretch occupies residues Asp408–Pro470. Over residues Arg412–Glu422 the composition is skewed to basic residues. A compositionally biased stretch (low complexity) spans Ser426–Ser439. Residues Gly440–Leu450 show a composition bias toward gly residues.

Belongs to the EGR C2H2-type zinc-finger protein family. In terms of assembly, interacts with HCFC1. Interacts with WWP2. Interacts with UBC9. Interacts with CITED1. Interacts (via phosphorylated form) with SFN. Ubiquitinated by WWP2 leading to proteasomal degradation. Post-translationally, acetylated at Lys-247. May be deacetylated by HDAC6, HDAC10 or SIRT1.

The protein localises to the nucleus. It functions in the pathway protein modification; protein sumoylation. Functionally, sequence-specific DNA-binding transcription factor. Plays a role in hindbrain segmentation by regulating the expression of a subset of homeobox containing genes and in Schwann cell myelination by regulating the expression of genes involved in the formation and maintenance of myelin. Binds to two EGR2-consensus sites EGR2A (5'-CTGTAGGAG-3') and EGR2B (5'-ATGTAGGTG-3') in the HOXB3 enhancer and promotes HOXB3 transcriptional activation. Binds to specific DNA sites located in the promoter region of HOXA4, HOXB2 and ERBB2. Regulates hindbrain segmentation by controlling the expression of Hox genes, such as HOXA4, HOXB3 and HOXB2, and thereby specifying odd and even rhombomeres. Promotes the expression of HOXB3 in the rhombomere r5 in the hindbrain. Regulates myelination in the peripheral nervous system after birth, possibly by regulating the expression of myelin proteins, such as MPZ, and by promoting the differentiation of Schwann cells. Involved in the development of the jaw openener musculature, probably by playing a role in its innervation through trigeminal motor neurons. May play a role in adipogenesis, possibly by regulating the expression of CEBPB. In terms of biological role, E3 SUMO-protein ligase helping SUMO1 conjugation to its coregulators NAB1 and NAB2, whose sumoylation down-regulates EGR2 transcriptional activity. The chain is E3 SUMO-protein ligase EGR2 (Egr2) from Rattus norvegicus (Rat).